We begin with the raw amino-acid sequence, 133 residues long: MTLNLCVLTPNRIVWDSEVKEIILSTNSGQIGILPNHAPIATAVDIGILRIRLNDQWLTMALMGGFARIGNNEITVLVNDAEKGSDIDPQEAQQTLEMAEANLSKAEGKRQTIEANLALRRARTRVEAINMMS.

The protein belongs to the ATPase epsilon chain family. In terms of assembly, F-type ATPases have 2 components, CF(1) - the catalytic core - and CF(0) - the membrane proton channel. CF(1) has five subunits: alpha(3), beta(3), gamma(1), delta(1), epsilon(1). CF(0) has three main subunits: a, b and c.

It localises to the plastid. Its subcellular location is the chloroplast thylakoid membrane. Produces ATP from ADP in the presence of a proton gradient across the membrane. This chain is ATP synthase epsilon chain, chloroplastic, found in Morus indica (Mulberry).